Here is a 676-residue protein sequence, read N- to C-terminus: Methionine--tRNA ligase (676 aa).

The short motif at 15-25 (PYANGPIHLGH) is the 'HIGH' region element. Zn(2+)-binding residues include Cys-146, Cys-149, Cys-159, and Cys-162. The 'KMSKS' region motif lies at 332 to 336 (KMSKS). Lys-335 contributes to the ATP binding site. One can recognise a tRNA-binding domain in the interval 575-676 (DFAKIDLRIA…EGAQPGMRVK (102 aa)).

This sequence belongs to the class-I aminoacyl-tRNA synthetase family. MetG type 1 subfamily. In terms of assembly, homodimer. It depends on Zn(2+) as a cofactor.

Its subcellular location is the cytoplasm. The enzyme catalyses tRNA(Met) + L-methionine + ATP = L-methionyl-tRNA(Met) + AMP + diphosphate. Is required not only for elongation of protein synthesis but also for the initiation of all mRNA translation through initiator tRNA(fMet) aminoacylation. The sequence is that of Methionine--tRNA ligase from Shewanella sp. (strain MR-4).